A 269-amino-acid chain; its full sequence is Trans-aconitate 2-methyltransferase (269 aa).

It belongs to the methyltransferase superfamily. Tam family.

Its subcellular location is the cytoplasm. It carries out the reaction trans-aconitate + S-adenosyl-L-methionine = (E)-3-(methoxycarbonyl)pent-2-enedioate + S-adenosyl-L-homocysteine. Functionally, catalyzes the S-adenosylmethionine monomethyl esterification of trans-aconitate. The chain is Trans-aconitate 2-methyltransferase from Streptomyces avermitilis (strain ATCC 31267 / DSM 46492 / JCM 5070 / NBRC 14893 / NCIMB 12804 / NRRL 8165 / MA-4680).